The following is a 112-amino-acid chain: T cell receptor alpha variable 30 (112 aa).

The signal sequence occupies residues 1-21 (METLLKVLSGTLLWQLTWVRS). The Ig-like domain occupies 24–112 (PVQSPQAVIL…YSGTYFCGTE (89 aa)). The N-linked (GlcNAc...) asparagine glycan is linked to Asn-42. Cys-43 and Cys-109 are disulfide-bonded.

As to quaternary structure, alpha-beta TR is a heterodimer composed of an alpha and beta chain; disulfide-linked. The alpha-beta TR is associated with the transmembrane signaling CD3 coreceptor proteins to form the TR-CD3 (TcR or TCR). The assembly of alpha-beta TR heterodimers with CD3 occurs in the endoplasmic reticulum where a single alpha-beta TR heterodimer associates with one CD3D-CD3E heterodimer, one CD3G-CD3E heterodimer and one CD247 homodimer forming a stable octameric structure. CD3D-CD3E and CD3G-CD3E heterodimers preferentially associate with TR alpha and TR beta chains, respectively. The association of the CD247 homodimer is the last step of TcR assembly in the endoplasmic reticulum and is required for transport to the cell surface.

Its subcellular location is the cell membrane. Functionally, v region of the variable domain of T cell receptor (TR) alpha chain that participates in the antigen recognition. Alpha-beta T cell receptors are antigen specific receptors which are essential to the immune response and are present on the cell surface of T lymphocytes. Recognize peptide-major histocompatibility (MH) (pMH) complexes that are displayed by antigen presenting cells (APC), a prerequisite for efficient T cell adaptive immunity against pathogens. Binding of alpha-beta TR to pMH complex initiates TR-CD3 clustering on the cell surface and intracellular activation of LCK that phosphorylates the ITAM motifs of CD3G, CD3D, CD3E and CD247 enabling the recruitment of ZAP70. In turn ZAP70 phosphorylates LAT, which recruits numerous signaling molecules to form the LAT signalosome. The LAT signalosome propagates signal branching to three major signaling pathways, the calcium, the mitogen-activated protein kinase (MAPK) kinase and the nuclear factor NF-kappa-B (NF-kB) pathways, leading to the mobilization of transcription factors that are critical for gene expression and essential for T cell growth and differentiation. The T cell repertoire is generated in the thymus, by V-(D)-J rearrangement. This repertoire is then shaped by intrathymic selection events to generate a peripheral T cell pool of self-MH restricted, non-autoaggressive T cells. Post-thymic interaction of alpha-beta TR with the pMH complexes shapes TR structural and functional avidity. The sequence is that of T cell receptor alpha variable 30 from Homo sapiens (Human).